We begin with the raw amino-acid sequence, 438 residues long: 3-phosphoshikimate 1-carboxyvinyltransferase (438 aa).

The 3-phosphoshikimate site is built by lysine 21, serine 22, and arginine 26. Lysine 21 serves as a coordination point for phosphoenolpyruvate. Residues glycine 93 and arginine 121 each coordinate phosphoenolpyruvate. 3-phosphoshikimate is bound by residues serine 166, serine 167, glutamine 168, serine 194, aspartate 324, and lysine 351. Glutamine 168 serves as a coordination point for phosphoenolpyruvate. Aspartate 324 serves as the catalytic Proton acceptor. Phosphoenolpyruvate is bound by residues arginine 355 and arginine 395.

This sequence belongs to the EPSP synthase family. In terms of assembly, monomer.

The protein localises to the cytoplasm. The enzyme catalyses 3-phosphoshikimate + phosphoenolpyruvate = 5-O-(1-carboxyvinyl)-3-phosphoshikimate + phosphate. It functions in the pathway metabolic intermediate biosynthesis; chorismate biosynthesis. Catalyzes the transfer of the enolpyruvyl moiety of phosphoenolpyruvate (PEP) to the 5-hydroxyl of shikimate-3-phosphate (S3P) to produce enolpyruvyl shikimate-3-phosphate and inorganic phosphate. This Methanobrevibacter smithii (strain ATCC 35061 / DSM 861 / OCM 144 / PS) protein is 3-phosphoshikimate 1-carboxyvinyltransferase.